The chain runs to 187 residues: Large ribosomal subunit protein uL5 (187 aa).

The protein belongs to the universal ribosomal protein uL5 family. Part of the 50S ribosomal subunit; part of the 5S rRNA/L5/L18/L25 subcomplex. Contacts the 5S rRNA and the P site tRNA. Forms a bridge to the 30S subunit in the 70S ribosome.

Functionally, this is one of the proteins that bind and probably mediate the attachment of the 5S RNA into the large ribosomal subunit, where it forms part of the central protuberance. In the 70S ribosome it contacts protein S13 of the 30S subunit (bridge B1b), connecting the 2 subunits; this bridge is implicated in subunit movement. Contacts the P site tRNA; the 5S rRNA and some of its associated proteins might help stabilize positioning of ribosome-bound tRNAs. This is Large ribosomal subunit protein uL5 from Brachyspira hyodysenteriae (strain ATCC 49526 / WA1).